The chain runs to 69 residues: UPF0337 protein ECA0631 (69 aa).

This sequence belongs to the UPF0337 (CsbD) family.

This chain is UPF0337 protein ECA0631, found in Pectobacterium atrosepticum (strain SCRI 1043 / ATCC BAA-672) (Erwinia carotovora subsp. atroseptica).